The following is a 156-amino-acid chain: Transcription antitermination protein NusB (156 aa).

This sequence belongs to the NusB family.

Its function is as follows. Involved in transcription antitermination. Required for transcription of ribosomal RNA (rRNA) genes. Binds specifically to the boxA antiterminator sequence of the ribosomal RNA (rrn) operons. In Rickettsia bellii (strain OSU 85-389), this protein is Transcription antitermination protein NusB.